A 507-amino-acid polypeptide reads, in one-letter code: Maturase K (507 aa).

Belongs to the intron maturase 2 family. MatK subfamily.

The protein resides in the plastid. It is found in the chloroplast. In terms of biological role, usually encoded in the trnK tRNA gene intron. Probably assists in splicing its own and other chloroplast group II introns. In Magnolia figo (Banana shrub), this protein is Maturase K.